The chain runs to 394 residues: Acetate kinase (394 aa).

N10 serves as a coordination point for Mg(2+). K17 is an ATP binding site. R87 contributes to the substrate binding site. D144 (proton donor/acceptor) is an active-site residue. ATP-binding positions include 204-208 (HLGNG), 279-281 (DMR), and 327-331 (GIGEN). E381 lines the Mg(2+) pocket.

The protein belongs to the acetokinase family. Homodimer. It depends on Mg(2+) as a cofactor. Mn(2+) serves as cofactor.

The protein resides in the cytoplasm. The catalysed reaction is acetate + ATP = acetyl phosphate + ADP. It functions in the pathway metabolic intermediate biosynthesis; acetyl-CoA biosynthesis; acetyl-CoA from acetate: step 1/2. Its function is as follows. Catalyzes the formation of acetyl phosphate from acetate and ATP. Can also catalyze the reverse reaction. The polypeptide is Acetate kinase (Ectopseudomonas mendocina (strain ymp) (Pseudomonas mendocina)).